The primary structure comprises 49 residues: Large ribosomal subunit protein bL33B (49 aa).

The protein belongs to the bacterial ribosomal protein bL33 family.

The chain is Large ribosomal subunit protein bL33B from Lactobacillus helveticus (strain DPC 4571).